The primary structure comprises 256 residues: MLIIPAIDIKDGRCVRLTRGDFNQQKIYLDNPCDMAIIWRKQNAKMLHVVDLDAALTGEMVNFLKIEQIVRELDIPLQVGGGIRSLDAVKRYLDIGVGRVVIGSAAVTNPGLIEEVLKIYRPSKIVVGIDAENGIPKIKGWTESCGMKDYELGLEMKQMGIERVVYTDISKDGMMQGFGYESTKRFAEMTGMKVTASGGVTSSDDLMKLVGLQQYGVDSVIIGKALYECNFPCQELWYNFEEDICIDHNFSTARKK.

Catalysis depends on D8, which acts as the Proton acceptor. D130 functions as the Proton donor in the catalytic mechanism.

The protein belongs to the HisA/HisF family.

Its subcellular location is the cytoplasm. It catalyses the reaction 1-(5-phospho-beta-D-ribosyl)-5-[(5-phospho-beta-D-ribosylamino)methylideneamino]imidazole-4-carboxamide = 5-[(5-phospho-1-deoxy-D-ribulos-1-ylimino)methylamino]-1-(5-phospho-beta-D-ribosyl)imidazole-4-carboxamide. It participates in amino-acid biosynthesis; L-histidine biosynthesis; L-histidine from 5-phospho-alpha-D-ribose 1-diphosphate: step 4/9. This Chlorobium phaeobacteroides (strain DSM 266 / SMG 266 / 2430) protein is 1-(5-phosphoribosyl)-5-[(5-phosphoribosylamino)methylideneamino] imidazole-4-carboxamide isomerase.